The following is a 555-amino-acid chain: Formate--tetrahydrofolate ligase (555 aa).

Thr64 to Thr71 contacts ATP.

The protein belongs to the formate--tetrahydrofolate ligase family.

It carries out the reaction (6S)-5,6,7,8-tetrahydrofolate + formate + ATP = (6R)-10-formyltetrahydrofolate + ADP + phosphate. The protein operates within one-carbon metabolism; tetrahydrofolate interconversion. The chain is Formate--tetrahydrofolate ligase from Allorhizobium ampelinum (strain ATCC BAA-846 / DSM 112012 / S4) (Agrobacterium vitis (strain S4)).